Reading from the N-terminus, the 510-residue chain is ATP synthase subunit alpha, mitochondrial (510 aa).

171-178 (GDRQTGKT) provides a ligand contact to ATP.

F-type ATP synthases have 2 components, the catalytic core F(1) and the membrane-embedded component F(0), linked together by a central stalk and a peripheral stalk. The central stalk, also called rotor shaft, is often seen as part of F(1). The peripheral stalk is seen as part of F(0). F(0) contains the membrane channel next to the rotor. F-type ATP synthases form dimers but each monomer functions independently in ATP generation. The dimer consists of 18 different polypeptides: ATP1 (subunit alpha, part of F(1), 3 molecules per monomer), ATP2 (subunit beta, part of F(1), 3 molecules per monomer), ATP3 (subunit gamma, part of the central stalk), ATP4 (subunit b, part of the peripheral stalk), ATP5/OSCP (subunit 5/OSCP, part of the peripheral stalk), ATP6 (subunit a, part of the peripheral stalk), ATP7 (subunit d, part of the peripheral stalk), ATP8 (subunit 8, part of the peripheral stalk), OLI1 (subunit c, part of the rotor, 10 molecules per monomer), ATP14 (subunit h, part of the peripheral stalk), ATP15 (subunit epsilon, part of the central stalk), ATP16 (subunit delta, part of the central stalk), ATP17 (subunit f, part of the peripheral stalk), ATP18 (subunit i/j, part of the peripheral stalk). Dimer-specific subunits are ATP19 (subunit k, at interface between monomers), ATP20 (subunit g, at interface between monomers), TIM11 (subunit e, at interface between monomers). Also contains subunit L.

Its subcellular location is the mitochondrion inner membrane. Mitochondrial membrane ATP synthase (F(1)F(0) ATP synthase or Complex V) produces ATP from ADP in the presence of a proton gradient across the membrane which is generated by electron transport complexes of the respiratory chain. F-type ATP synthases consist of two structural domains, F(1) - containing the extramembraneous catalytic core, and F(0) - containing the membrane proton channel, linked together by a central stalk and a peripheral stalk. During catalysis, ATP synthesis in the catalytic domain of F(1) is coupled via a rotary mechanism of the central stalk subunits to proton translocation. Subunits alpha/ATP1 and beta/ATP2 form the catalytic core in F(1). Rotation of the central stalk against the surrounding alpha/ATP1(3)beta/ATP2(3) subunits leads to hydrolysis of ATP in three separate catalytic sites on the beta/ATP2 subunits. Subunit alpha/ATP1 does not bear the catalytic high-affinity ATP-binding sites. This is ATP synthase subunit alpha, mitochondrial from Pichia angusta (Yeast).